The chain runs to 197 residues: 3-isopropylmalate dehydratase small subunit (197 aa).

It belongs to the LeuD family. LeuD type 1 subfamily. Heterodimer of LeuC and LeuD.

The enzyme catalyses (2R,3S)-3-isopropylmalate = (2S)-2-isopropylmalate. It participates in amino-acid biosynthesis; L-leucine biosynthesis; L-leucine from 3-methyl-2-oxobutanoate: step 2/4. Functionally, catalyzes the isomerization between 2-isopropylmalate and 3-isopropylmalate, via the formation of 2-isopropylmaleate. The sequence is that of 3-isopropylmalate dehydratase small subunit from Azobacteroides pseudotrichonymphae genomovar. CFP2.